The chain runs to 671 residues: Talaropentaene synthase (671 aa).

D92 provides a ligand contact to Mg(2+). A DDXXD 1 motif is present at residues 92 to 96; the sequence is DDMTD. Positions 223–231 match the NSE/DTE motif; the sequence is NDLYSYEKE. Residues K389, R392, and H421 each contribute to the isopentenyl diphosphate site. D428 and D432 together coordinate Mg(2+). Residues 428–432 carry the DDXXD 2 motif; that stretch reads DDIED. Residue R437 coordinates dimethylallyl diphosphate. R438 is a binding site for isopentenyl diphosphate. Dimethylallyl diphosphate is bound by residues K515, T516, Q551, N558, K568, and K578.

In the N-terminal section; belongs to the terpene synthase family. The protein in the C-terminal section; belongs to the FPP/GGPP synthase family. Mg(2+) serves as cofactor.

The catalysed reaction is 5 isopentenyl diphosphate + dimethylallyl diphosphate = all-trans-hexaprenyl diphosphate + 5 diphosphate. It catalyses the reaction all-trans-hexaprenyl diphosphate = talaropentaene + diphosphate. In terms of biological role, bifunctional terpene synthase that converts dimethylallyl diphosphate (DMAPP) and isopentenyl diphosphate (IPP) into talaropentaene as a single product. The C-terminal prenyltransferase (PT) domain of MpMS catalyzes formation of hexaprenyl diphosphate (HexPP), whereas the N-terminal terpene cyclase (TC) domain catalyzes the cyclization of HexPP to talaropentaene. This Talaromyces verruculosus (Penicillium verruculosum) protein is Talaropentaene synthase.